We begin with the raw amino-acid sequence, 674 residues long: U-box domain-containing protein 16 (674 aa).

The U-box domain occupies 273-347 (NIPADFRCPI…VLWCRDQKIP (75 aa)). ARM repeat units follow at residues 399–438 (TVAR…NLSI), 441–481 (QNKT…SLAG), and 484–523 (AYRR…NLVA).

The catalysed reaction is S-ubiquitinyl-[E2 ubiquitin-conjugating enzyme]-L-cysteine + [acceptor protein]-L-lysine = [E2 ubiquitin-conjugating enzyme]-L-cysteine + N(6)-ubiquitinyl-[acceptor protein]-L-lysine.. It functions in the pathway protein modification; protein ubiquitination. Functionally, functions as an E3 ubiquitin ligase. The polypeptide is U-box domain-containing protein 16 (PUB16) (Arabidopsis thaliana (Mouse-ear cress)).